Reading from the N-terminus, the 204-residue chain is Large ribosomal subunit protein uL4 (204 aa).

Positions 42–52 (GTKAQKSRSQV) are enriched in polar residues. Residues 42-70 (GTKAQKSRSQVSGTTKKSKKQKGGGARHG) form a disordered region.

Belongs to the universal ribosomal protein uL4 family. In terms of assembly, part of the 50S ribosomal subunit.

Functionally, one of the primary rRNA binding proteins, this protein initially binds near the 5'-end of the 23S rRNA. It is important during the early stages of 50S assembly. It makes multiple contacts with different domains of the 23S rRNA in the assembled 50S subunit and ribosome. Its function is as follows. Forms part of the polypeptide exit tunnel. In Xylella fastidiosa (strain M12), this protein is Large ribosomal subunit protein uL4.